The following is a 420-amino-acid chain: COP9 signalosome complex subunit 5 (420 aa).

The region spanning 73–208 (AALSALACMK…IGAFRTMPET (136 aa)) is the MPN domain. H154, H156, and D167 together coordinate Zn(2+). A JAMM motif motif is present at residues 154-167 (HSHPGYGCWLSGID).

This sequence belongs to the peptidase M67A family. CSN5 subfamily. In terms of assembly, component of the COP9 signalosome (CSN) complex.

It localises to the cytoplasm. The protein localises to the nucleus. Its function is as follows. Catalytic component of the COP9 signalosome (CSN) complex that acts as an regulator of the ubiquitin (Ubl) conjugation pathway by mediating the deneddylation of the cullin subunit of SCF-type E3 ubiquitin-protein ligase complexes. The CSN complex is involved in the regulation of the mating pheromone response. This chain is COP9 signalosome complex subunit 5 (RRI1), found in Eremothecium gossypii (strain ATCC 10895 / CBS 109.51 / FGSC 9923 / NRRL Y-1056) (Yeast).